Here is a 309-residue protein sequence, read N- to C-terminus: Pyridoxal kinase (309 aa).

N-acetylthreonine; in Pyridoxal kinase, N-terminally processed is present on Thr-2. Ser-23 and Thr-58 together coordinate pyridoxal. Position 58 (Thr-58) interacts with pyridoxal 5'-phosphate. Residue Asp-124 coordinates ATP. Asp-124 is a Na(+) binding site. A Mg(2+)-binding site is contributed by Asp-129. Thr-155 serves as a coordination point for Na(+). ATP-binding positions include 157–160 (NQFE), 193–194 (TS), 225–227 (IPA), and Thr-232. Thr-193 provides a ligand contact to Na(+). 233–234 (GD) is a binding site for pyridoxal 5'-phosphate. Asp-234 acts as the Proton acceptor in catalysis.

This sequence belongs to the pyridoxine kinase family. As to quaternary structure, homodimer. Zn(2+) serves as cofactor. In terms of tissue distribution, expressed ubiquitously in leaves, stems, roots, flowers and siliques. Present in root hairs and other tip-growing cells such as papillar cells on the top of stigma.

It catalyses the reaction pyridoxal + ATP = pyridoxal 5'-phosphate + ADP + H(+). It participates in cofactor metabolism; pyridoxal 5'-phosphate salvage; pyridoxal 5'-phosphate from pyridoxal: step 1/1. Catalyzes the transfer of a phosphate group from ATP to the 5-hydroxylmethyl group of pyridoxal to form the biologically active pyridoxal phosphate, an active form of vitamin B6. Required for Na(+) and K(+) homeostasis and for salt tolerance. Involved in root hair development, both for initiation and tip growth. In Arabidopsis thaliana (Mouse-ear cress), this protein is Pyridoxal kinase.